An 88-amino-acid chain; its full sequence is MYILEISLKFTPMPVSVQRKEAEAAQAAYQQVVEALRSGQPSVLELHCEFQAEKKLAVLTSEIASVQLYEKSGGSATVKRPGFAVIGE.

This sequence belongs to the UPF0367 family.

This Synechococcus elongatus (strain ATCC 33912 / PCC 7942 / FACHB-805) (Anacystis nidulans R2) protein is UPF0367 protein Synpcc7942_1638.